Reading from the N-terminus, the 226-residue chain is Endonuclease NucS (226 aa).

Belongs to the NucS endonuclease family.

The protein localises to the cytoplasm. Its function is as follows. Cleaves both 3' and 5' ssDNA extremities of branched DNA structures. The protein is Endonuclease NucS of Mycobacterium tuberculosis (strain CDC 1551 / Oshkosh).